The sequence spans 611 residues: Vitamin B12 transporter BtuB (611 aa).

Positions 1 to 22 (MQKSALAIALASLLTPISYLHA) are cleaved as a signal peptide. The TonB box motif lies at 29 to 36 (ETVVVTAN). The region spanning 41–154 (KASSTLADVE…IGGVINIITK (114 aa)) is the TBDR plug domain. A TBDR beta-barrel domain is found at 159 to 611 (QQGTTVSAGL…AYYLNIGYQF (453 aa)). Residues 594-611 (NGYPAAERAYYLNIGYQF) carry the TonB C-terminal box motif.

Belongs to the TonB-dependent receptor family. BtuB (TC 1.B.14.3.1) subfamily.

Its subcellular location is the cell outer membrane. In terms of biological role, involved in the active translocation of vitamin B12 (cyanocobalamin) across the outer membrane to the periplasmic space. It derives its energy for transport by interacting with the trans-periplasmic membrane protein TonB. The chain is Vitamin B12 transporter BtuB from Vibrio cholerae serotype O1 (strain ATCC 39541 / Classical Ogawa 395 / O395).